The sequence spans 257 residues: Exosome complex component Rrp4 (257 aa).

Positions 65–137 (GDNVLGKIVD…EVNQIDLTTK (73 aa)) constitute an S1 motif domain. The KH domain occupies 147–206 (RGGQLVTITPSKVPRLIGKGGSMINMIKTLTGTRIIVGQNGWVWVSGKNDELERLAIEAI).

This sequence belongs to the RRP4 family. As to quaternary structure, component of the archaeal exosome complex. Forms a trimer of Rrp4 and/or Csl4 subunits. The trimer associates with a hexameric ring-like arrangement composed of 3 Rrp41-Rrp42 heterodimers.

The protein localises to the cytoplasm. Functionally, non-catalytic component of the exosome, which is a complex involved in RNA degradation. Increases the RNA binding and the efficiency of RNA degradation. Confers strong poly(A) specificity to the exosome. In Thermococcus kodakarensis (strain ATCC BAA-918 / JCM 12380 / KOD1) (Pyrococcus kodakaraensis (strain KOD1)), this protein is Exosome complex component Rrp4.